Consider the following 469-residue polypeptide: 3-isopropylmalate dehydratase large subunit (469 aa).

3 residues coordinate [4Fe-4S] cluster: C347, C408, and C411.

Belongs to the aconitase/IPM isomerase family. LeuC type 1 subfamily. In terms of assembly, heterodimer of LeuC and LeuD. It depends on [4Fe-4S] cluster as a cofactor.

It catalyses the reaction (2R,3S)-3-isopropylmalate = (2S)-2-isopropylmalate. It functions in the pathway amino-acid biosynthesis; L-leucine biosynthesis; L-leucine from 3-methyl-2-oxobutanoate: step 2/4. Functionally, catalyzes the isomerization between 2-isopropylmalate and 3-isopropylmalate, via the formation of 2-isopropylmaleate. The polypeptide is 3-isopropylmalate dehydratase large subunit (Actinobacillus pleuropneumoniae serotype 3 (strain JL03)).